The primary structure comprises 141 residues: Galactose-6-phosphate isomerase subunit LacA (141 aa).

The protein belongs to the LacAB/RpiB family. In terms of assembly, heteromultimeric protein consisting of LacA and LacB.

It catalyses the reaction aldehydo-D-galactose 6-phosphate = keto-D-tagatose 6-phosphate. The protein operates within carbohydrate metabolism; D-galactose 6-phosphate degradation; D-tagatose 6-phosphate from D-galactose 6-phosphate: step 1/1. This is Galactose-6-phosphate isomerase subunit LacA from Streptococcus pneumoniae serotype 4 (strain ATCC BAA-334 / TIGR4).